The chain runs to 227 residues: A-type potassium channel modulatory protein KCNIP1 (227 aa).

In terms of domain architecture, EF-hand 1; degenerate spans 38–94; sequence LEMTMVCHRPEGLEQLEAQTNFTKRELQVLYRGFKNECPSGVVNEDTFKQIYAQFFP. EF-hand domains are found at residues 97 to 132, 133 to 168, and 181 to 216; these read DAST…LLRG, TVHE…IYDM, and TPRQ…DDNI. Ca(2+)-binding residues include Asp146, Asn148, Asp150, Tyr152, Glu157, Asp194, Asn196, Asp198, and Glu205. Residues 214-227 form an interaction with KCND2 region; it reads DNIMRSLQLFQNVM.

This sequence belongs to the recoverin family. Component of heteromultimeric potassium channels. Identified in potassium channel complexes containing KCND1, KCND2, KCND3, KCNIP1, KCNIP2, KCNIP3, KCNIP4, DPP6 and DPP10. Part of a heterooctamer composed of the tetrameric channel and four KCNIP1 chains. Probably part of a complex consisting of KCNIP1, KCNIP2 isoform 3 and KCND2. Self-associates to form homodimers and homotetramers. Interacts with KCNIP2 isoform 3 in a calcium-dependent manner. Interacts with Naja atra venom CTX3. Interacts with KCND2; this interaction mediates the capture of both the N- and C-terminus of KCND2, thus preventing KCND2 N-type inactivation and modulates the channel gating kinetics. Interacts with KCND3; each KCNIP1 monomer interacts with two adjacent KCND3 subunits, through both the N-terminal inactivation ball of a KCND3 subunit and a C-terminal helix from the adjacent KCND3 subunit, clamping them together; this interaction stabilizes the tetrameric form and modulates the channel gating kinetics namely channel activation and inactivation kinetics and rate of recovery from inactivation. Isoform 1 and isoform 2 are expressed in brain and kidney. Isoform 1 is also expressed in liver, pancreas, skeletal muscle, small intestine and testis. Isoform 2 is also expressed in lung, pancreas, leukocytes, prostate and thymus.

The protein resides in the cell membrane. It localises to the cytoplasm. Its subcellular location is the cell projection. It is found in the dendrite. Regulatory subunit of Kv4/D (Shal)-type voltage-gated rapidly inactivating A-type potassium channels. Regulates channel density, inactivation kinetics and rate of recovery from inactivation in a calcium-dependent and isoform-specific manner. In vitro, modulates KCND1/Kv4.1 and KCND2/Kv4.2 currents. Increases the presence of KCND2 at the cell surface. This is A-type potassium channel modulatory protein KCNIP1 from Homo sapiens (Human).